Here is a 188-residue protein sequence, read N- to C-terminus: Inosine triphosphate pyrophosphatase (188 aa).

An ITP-binding site is contributed by 12 to 17 (TGNANK). Position 40 (Glu-40) interacts with Mg(2+). Residues Lys-52, 68–69 (DT), Lys-85, 144–147 (FGWD), Lys-165, and 170–171 (HR) contribute to the ITP site.

It belongs to the HAM1 NTPase family. In terms of assembly, homodimer. Requires Mg(2+) as cofactor. Mn(2+) serves as cofactor.

Its subcellular location is the cytoplasm. The protein localises to the nucleus. It carries out the reaction ITP + H2O = IMP + diphosphate + H(+). The catalysed reaction is dITP + H2O = dIMP + diphosphate + H(+). It catalyses the reaction XTP + H2O = XMP + diphosphate + H(+). Its function is as follows. Pyrophosphatase that hydrolyzes non-canonical purine nucleotides such as inosine triphosphate (ITP), deoxyinosine triphosphate (dITP) or xanthosine 5'-triphosphate (XTP) to their respective monophosphate derivatives. The enzyme does not distinguish between the deoxy- and ribose forms. Probably excludes non-canonical purines from RNA and DNA precursor pools, thus preventing their incorporation into RNA and DNA and avoiding chromosomal lesions. In Podospora anserina (strain S / ATCC MYA-4624 / DSM 980 / FGSC 10383) (Pleurage anserina), this protein is Inosine triphosphate pyrophosphatase.